A 316-amino-acid chain; its full sequence is Glutamyl-Q tRNA(Asp) synthetase (316 aa).

L-glutamate is bound by residues 13–17 (RFAPS) and D49. The short motif at 16 to 26 (PSPSGDLHFGS) is the 'HIGH' region element. 4 residues coordinate Zn(2+): C105, C107, Y119, and C123. The L-glutamate site is built by Y176 and R194. Positions 232–236 (KLSKQ) match the 'KMSKS' region motif. K235 is a binding site for ATP.

It belongs to the class-I aminoacyl-tRNA synthetase family. GluQ subfamily. The cofactor is Zn(2+).

In terms of biological role, catalyzes the tRNA-independent activation of glutamate in presence of ATP and the subsequent transfer of glutamate onto a tRNA(Asp). Glutamate is transferred on the 2-amino-5-(4,5-dihydroxy-2-cyclopenten-1-yl) moiety of the queuosine in the wobble position of the QUC anticodon. The protein is Glutamyl-Q tRNA(Asp) synthetase of Photorhabdus laumondii subsp. laumondii (strain DSM 15139 / CIP 105565 / TT01) (Photorhabdus luminescens subsp. laumondii).